A 284-amino-acid chain; its full sequence is MEMO1 family protein YN1551_0739 (284 aa).

It belongs to the MEMO1 family.

The sequence is that of MEMO1 family protein YN1551_0739 from Saccharolobus islandicus (strain Y.N.15.51 / Yellowstone #2) (Sulfolobus islandicus).